The sequence spans 386 residues: Mannitol-1-phosphate 5-dehydrogenase (386 aa).

6-17 (AIHFGGGNIGRG) is an NAD(+) binding site. Residue Lys214 is part of the active site.

Belongs to the mannitol dehydrogenase family. Monomer.

The catalysed reaction is D-mannitol 1-phosphate + NAD(+) = beta-D-fructose 6-phosphate + NADH + H(+). Functionally, catalyzes the NAD(H)-dependent interconversion of D-fructose 6-phosphate and D-mannitol 1-phosphate in the mannitol metabolic pathway. Plays a key role in liamocins biosynthesis by providing the mannitol moity that is linked to 3,5-dihydroxydecanoic acid (provided by the HR-PKS PKS1) via ester bond formation catalyzed by the esterase EST1. In Aureobasidium melanogenum (Aureobasidium pullulans var. melanogenum), this protein is Mannitol-1-phosphate 5-dehydrogenase.